The sequence spans 824 residues: Neuronal PAS domain-containing protein 2 (824 aa).

Positions 1–10 (MDEDEKDRAK) are enriched in basic and acidic residues. Residues 1–21 (MDEDEKDRAKRASRNKSEKKR) form a disordered region. The segment at 1–61 (MDEDEKDRAK…VIGFLQKHNE (61 aa)) is sufficient for heterodimer formation with BMAL1, E-box binding and for the effect of NADPH. Residues 9-59 (AKRASRNKSEKKRRDQFNVLIKELSSMLPGNTRKMDKTTVLEKVIGFLQKH) enclose the bHLH domain. The PAS 1 domain occupies 82 to 152 (NEEFTQLMLE…KILSSHMLVT (71 aa)). Residues histidine 119 and histidine 171 each contribute to the heme b site. The PAS 2 domain maps to 237-307 (FLKEMCIVDE…RCHQHLMQFG (71 aa)). In terms of domain architecture, PAC spans 311–354 (SCCYRFLTKGQQWIWLQTHYYITYHQWNSKPEFIVCTHSVVSYA). Disordered regions lie at residues 367–437 (EDPP…MAEA), 556–667 (SSTQ…PDFS), 681–704 (QPMM…RQVK), and 739–824 (PSFP…QPPR). Residues 378-390 (ALKDKGSSLEPRQ) show a composition bias toward basic and acidic residues. Positions 421 to 431 (TAMSEPTSTPT) are enriched in polar residues. The segment covering 559-576 (QRPEAQQQLQQRSAAVTQ) has biased composition (low complexity). A compositionally biased stretch (polar residues) spans 587-610 (GQISSAQVTSQHLLRESSVISTQG). Residues 614–636 (MRSSQLMQSSGRSGSSLVSPFSS) are compositionally biased toward low complexity. 2 stretches are compositionally biased toward polar residues: residues 645–664 (LNLT…QPSP) and 694–704 (SEVSRTGRQVK). The segment covering 739–760 (PSFPASQPSPLQPAQARQQPPQ) has biased composition (low complexity). Positions 766 to 789 (QAPTSLHSEQQDSLLLSTYSQQPG) are enriched in polar residues. The segment covering 794 to 805 (PQPPPAQPQPLR) has biased composition (pro residues). Low complexity predominate over residues 809-824 (RVSSLSESSGLQQPPR).

Component of the circadian clock oscillator which includes the CRY proteins, CLOCK or NPAS2, BMAL1 or BMAL2, CSNK1D and/or CSNK1E, TIMELESS and the PER proteins. Efficient DNA binding requires dimerization with another bHLH protein. Forms a heterodimer with BMAL1 and this heterodimerization is required for E-box-dependent transactivation. Interacts with NCOA3, KAT2B, CREBBP and EP300. Heme is required as a cofactor.

The protein localises to the nucleus. Its activity is regulated as follows. Carbon monoxide (CO) and the redox state of the cell can modulate the transcriptional activity of the NPAS2-BMAL1 heterodimer. NADH and NADPH enhance the DNA-binding activity of the heterodimer whereas CO binds the heme group in NPAS2 and inhibits the DNA-binding activity of the heterodimer. Its function is as follows. Transcriptional activator which forms a core component of the circadian clock. The circadian clock, an internal time-keeping system, regulates various physiological processes through the generation of approximately 24 hour circadian rhythms in gene expression, which are translated into rhythms in metabolism and behavior. It is derived from the Latin roots 'circa' (about) and 'diem' (day) and acts as an important regulator of a wide array of physiological functions including metabolism, sleep, body temperature, blood pressure, endocrine, immune, cardiovascular, and renal function. Consists of two major components: the central clock, residing in the suprachiasmatic nucleus (SCN) of the brain, and the peripheral clocks that are present in nearly every tissue and organ system. Both the central and peripheral clocks can be reset by environmental cues, also known as Zeitgebers (German for 'timegivers'). The predominant Zeitgeber for the central clock is light, which is sensed by retina and signals directly to the SCN. The central clock entrains the peripheral clocks through neuronal and hormonal signals, body temperature and feeding-related cues, aligning all clocks with the external light/dark cycle. Circadian rhythms allow an organism to achieve temporal homeostasis with its environment at the molecular level by regulating gene expression to create a peak of protein expression once every 24 hours to control when a particular physiological process is most active with respect to the solar day. Transcription and translation of core clock components (CLOCK, NPAS2, BMAL1, BMAL2, PER1, PER2, PER3, CRY1 and CRY2) plays a critical role in rhythm generation, whereas delays imposed by post-translational modifications (PTMs) are important for determining the period (tau) of the rhythms (tau refers to the period of a rhythm and is the length, in time, of one complete cycle). A diurnal rhythm is synchronized with the day/night cycle, while the ultradian and infradian rhythms have a period shorter and longer than 24 hours, respectively. Disruptions in the circadian rhythms contribute to the pathology of cardiovascular diseases, cancer, metabolic syndromes and aging. A transcription/translation feedback loop (TTFL) forms the core of the molecular circadian clock mechanism. Transcription factors, CLOCK or NPAS2 and BMAL1 or BMAL2, form the positive limb of the feedback loop, act in the form of a heterodimer and activate the transcription of core clock genes and clock-controlled genes (involved in key metabolic processes), harboring E-box elements (5'-CACGTG-3') within their promoters. The core clock genes: PER1/2/3 and CRY1/2 which are transcriptional repressors form the negative limb of the feedback loop and interact with the CLOCK|NPAS2-BMAL1|BMAL2 heterodimer inhibiting its activity and thereby negatively regulating their own expression. This heterodimer also activates nuclear receptors NR1D1/2 and RORA/B/G, which form a second feedback loop and which activate and repress BMAL1 transcription, respectively. The NPAS2-BMAL1 heterodimer positively regulates the expression of MAOA, F7 and LDHA and modulates the circadian rhythm of daytime contrast sensitivity by regulating the rhythmic expression of adenylate cyclase type 1 (ADCY1) in the retina. NPAS2 plays an important role in sleep homeostasis and in maintaining circadian behaviors in normal light/dark and feeding conditions and in the effective synchronization of feeding behavior with scheduled food availability. Regulates the gene transcription of key metabolic pathways in the liver and is involved in DNA damage response by regulating several cell cycle and DNA repair genes. Controls the circadian rhythm of NR0B2 expression by binding rhythmically to its promoter. Mediates the diurnal variation in the expression of GABARA1 receptor in the brain and contributes to the regulation of anxiety-like behaviors and GABAergic neurotransmission in the ventral striatum. This Homo sapiens (Human) protein is Neuronal PAS domain-containing protein 2 (NPAS2).